An 807-amino-acid chain; its full sequence is Glycerol-3-phosphate acyltransferase (807 aa).

The short motif at 308–313 is the HXXXXD motif element; sequence CHRSHM.

Belongs to the GPAT/DAPAT family.

The protein localises to the cell inner membrane. It catalyses the reaction sn-glycerol 3-phosphate + an acyl-CoA = a 1-acyl-sn-glycero-3-phosphate + CoA. It participates in phospholipid metabolism; CDP-diacylglycerol biosynthesis; CDP-diacylglycerol from sn-glycerol 3-phosphate: step 1/3. The chain is Glycerol-3-phosphate acyltransferase from Shewanella amazonensis (strain ATCC BAA-1098 / SB2B).